Here is a 117-residue protein sequence, read N- to C-terminus: DNA-binding protein DDB_G0278111 (117 aa).

Residues 1 to 40 (MSSEKEIQQQLSQMQGQGFDPEAQQRQEAQRQEANERRQG) are disordered. The span at 8–22 (QQQLSQMQGQGFDPE) shows a compositional bias: low complexity. Residues 23-39 (AQQRQEAQRQEANERRQ) are compositionally biased toward basic and acidic residues.

This sequence belongs to the PDCD5 family.

This is DNA-binding protein DDB_G0278111 from Dictyostelium discoideum (Social amoeba).